Consider the following 486-residue polypeptide: E3 ubiquitin-protein ligase TRIM50 (486 aa).

Residues 16-57 form an RING-type zinc finger; sequence CPVCLEVFKEPLMLQCGHSYCKGCLLSLSRHLDSELRCPVCR. The B box-type zinc finger occupies 84–125; the sequence is PEPQVCTHHRNPLSLFCEKDQELICGLCGLLGSHQHHRVTPV. Zn(2+) contacts are provided by Cys-89, His-92, Cys-111, and His-117. 2 coiled-coil regions span residues 125–170 and 204–235; these read VSTV…ESDV and LVASLDMQLEQARGAQERLAQATCMLEQFGNE. Residues 275–474 form the B30.2/SPRY domain; the sequence is DIKLTVWKRL…LPMVLPLPSG (200 aa). At Lys-372 the chain carries N6-acetyllysine.

It belongs to the TRIM/RBCC family. Can form dimers and trimers. Interacts with several E2 ubiquitin-conjugating enzymes, including UBE2L6, UBE2E1, UBE2E3. No interaction with UBE2H. Interacts with BECN1. Interacts with SQSTM1. Interacts with NLRP3. Auto-ubiquitinated. Post-translationally, acetylated by EP300 and KAT2B. HDAC6 drives TRIM50 deacetylation. Acetylation antagonizes with TRIM50 ubiquitination.

The protein localises to the cytoplasm. The catalysed reaction is S-ubiquitinyl-[E2 ubiquitin-conjugating enzyme]-L-cysteine + [acceptor protein]-L-lysine = [E2 ubiquitin-conjugating enzyme]-L-cysteine + N(6)-ubiquitinyl-[acceptor protein]-L-lysine.. Functionally, E3 ubiquitin-protein ligase that ubiquitinates Beclin-1/BECN1 in a 'Lys-63'-dependent manner enhancing its binding to ULK1. In turn, promotes starvation-induced autophagy activation. Also interacts with p62/SQSTM1 protein and thereby induces the formation and the autophagy clearance of aggresome-associated polyubiquitinated proteins through HDAC6 interaction. Also promotes NLRP3 inflammasome activation by directly inducing NLRP3 oligomerization independent of its E3 ligase function. In Sus scrofa (Pig), this protein is E3 ubiquitin-protein ligase TRIM50 (TRIM50).